The primary structure comprises 430 residues: Anaerobic glycerol-3-phosphate dehydrogenase subunit B (430 aa).

It belongs to the anaerobic G-3-P dehydrogenase subunit B family. As to quaternary structure, composed of a catalytic GlpA/B dimer and of membrane bound GlpC. The cofactor is FMN.

The enzyme catalyses a quinone + sn-glycerol 3-phosphate = dihydroxyacetone phosphate + a quinol. Its pathway is polyol metabolism; glycerol degradation via glycerol kinase pathway; glycerone phosphate from sn-glycerol 3-phosphate (anaerobic route): step 1/1. Conversion of glycerol 3-phosphate to dihydroxyacetone. Uses fumarate or nitrate as electron acceptor. In Actinobacillus succinogenes (strain ATCC 55618 / DSM 22257 / CCUG 43843 / 130Z), this protein is Anaerobic glycerol-3-phosphate dehydrogenase subunit B.